A 349-amino-acid chain; its full sequence is Bifunctional nitrilase/nitrile hydratase NIT4A (349 aa).

The CN hydrolase domain occupies 29 to 301 (VRATVVQAST…EALISADLDL (273 aa)). Glu-69 (proton acceptor) is an active-site residue. The active site involves Lys-156. Catalysis depends on Cys-190, which acts as the Nucleophile.

This sequence belongs to the carbon-nitrogen hydrolase superfamily. Nitrilase family. Ubiquitous.

The catalysed reaction is L-asparagine = 3-cyano-L-alanine + H2O. It carries out the reaction 3-cyano-L-alanine + 2 H2O = L-aspartate + NH4(+). Functionally, involved in the cyanide detoxification pathway. Has nitrilase and nitrile-hydratase activity in the ratio 4.0:1, producing both asparagine and aspartic acid from beta-cyano-L-alanine (Ala(CN)). Can also use 3-phenylpropionitrile as substrate, but not indole-3-acetonitrile. In Lupinus angustifolius (Narrow-leaved blue lupine), this protein is Bifunctional nitrilase/nitrile hydratase NIT4A (NIT4A).